The following is a 311-amino-acid chain: Olfactory receptor 287 (311 aa).

The Extracellular segment spans residues 1–27 (MAWSTGQNLSTPGPFILLGFPGPRSMR). N-linked (GlcNAc...) asparagine glycosylation is present at Asn-8. The chain crosses the membrane as a helical span at residues 28–53 (IGLFLLFLVMYLLTVVGNLAIISLVG). The Cytoplasmic portion of the chain corresponds to 54-60 (AHRCLQT). The helical transmembrane segment at 61–82 (PMYFFLCNLSFLEIWFTTACVP) threads the bilayer. Topologically, residues 83–103 (KTLATFAPRGGVISLAGCATQ) are extracellular. A disulfide bridge links Cys-100 with Cys-192. The helical transmembrane segment at 104-123 (MYFVFSLGCTEYFLLAVMAY) threads the bilayer. The Cytoplasmic segment spans residues 124 to 142 (DRYLAICLPLRYGGIMTPG). The chain crosses the membrane as a helical span at residues 143-161 (LAMRLALGSWLCGFSAITV). The Extracellular portion of the chain corresponds to 162 to 199 (PATLIARLSFCGSRVINHFFCDISPWIVLSCTDTQVVE). The chain crosses the membrane as a helical span at residues 200–222 (LVSFGIAFCVILGSCGITLVSYA). At 223-239 (YIITTIIKIPSARGRHR) the chain is on the cytoplasmic side. Residues 240–263 (AFSTCSSHLTVVLIWYGSTIFLHV) form a helical membrane-spanning segment. The Extracellular segment spans residues 264–275 (RTSVESSLDLTK). A helical transmembrane segment spans residues 276-295 (AITVLNTIVTPVLNPFIYTL). At 296-311 (RNKDVKEALRRTVKGK) the chain is on the cytoplasmic side.

This sequence belongs to the G-protein coupled receptor 1 family. As to expression, olfactory epithelium.

It localises to the cell membrane. Odorant receptor. The polypeptide is Olfactory receptor 287 (Olr287) (Rattus norvegicus (Rat)).